The primary structure comprises 1436 residues: Inositol hexakisphosphate and diphosphoinositol-pentakisphosphate kinase 1 (1436 aa).

Residue K64 to K65 participates in substrate binding. ATP contacts are provided by residues R145, K198, H205, R224, E248 to M251, and D257 to K259. R224 to K225 contacts substrate. Positions 259 and 273 each coordinate substrate. ATP-binding positions include S275, D320, and D332 to N334. Residue S337–K340 coordinates substrate. The interval P382–A453 is polyphosphoinositide-binding domain. The disordered stretch occupies residues G915 to R998. Phosphoserine occurs at positions 939, 982, 1032, 1068, 1140, and 1147. Disordered regions lie at residues N1131–D1191 and S1389–S1436. Over residues S1163 to V1181 the composition is skewed to low complexity. Residues L1405–S1436 show a composition bias toward acidic residues.

The protein belongs to the histidine acid phosphatase family. VIP1 subfamily.

The protein localises to the cytoplasm. Its subcellular location is the cytosol. It is found in the cell membrane. The catalysed reaction is 1D-myo-inositol hexakisphosphate + ATP = 1-diphospho-1D-myo-inositol 2,3,4,5,6-pentakisphosphate + ADP. It catalyses the reaction 5-diphospho-1D-myo-inositol 1,2,3,4,6-pentakisphosphate + ATP + H(+) = 1,5-bis(diphospho)-1D-myo-inositol 2,3,4,6-tetrakisphosphate + ADP. Bifunctional inositol kinase that acts in concert with the IP6K kinases IP6K1, IP6K2 and IP6K3 to synthesize the diphosphate group-containing inositol pyrophosphates diphosphoinositol pentakisphosphate, PP-InsP5, and bis-diphosphoinositol tetrakisphosphate, (PP)2-InsP4. PP-InsP5 and (PP)2-InsP4, also respectively called InsP7 and InsP8, regulate a variety of cellular processes, including apoptosis, vesicle trafficking, cytoskeletal dynamics, exocytosis, insulin signaling and neutrophil activation. Phosphorylates inositol hexakisphosphate (InsP6) at position 1 to produce PP-InsP5 which is in turn phosphorylated by IP6Ks to produce (PP)2-InsP4. Alternatively, phosphorylates PP-InsP5 at position 1, produced by IP6Ks from InsP6, to produce (PP)2-InsP4. Activated when cells are exposed to hyperosmotic stress. The chain is Inositol hexakisphosphate and diphosphoinositol-pentakisphosphate kinase 1 from Mus musculus (Mouse).